The sequence spans 218 residues: N-(5'-phosphoribosyl)anthranilate isomerase (218 aa).

Belongs to the TrpF family.

The enzyme catalyses N-(5-phospho-beta-D-ribosyl)anthranilate = 1-(2-carboxyphenylamino)-1-deoxy-D-ribulose 5-phosphate. It participates in amino-acid biosynthesis; L-tryptophan biosynthesis; L-tryptophan from chorismate: step 3/5. In Bordetella pertussis (strain Tohama I / ATCC BAA-589 / NCTC 13251), this protein is N-(5'-phosphoribosyl)anthranilate isomerase.